The following is a 374-amino-acid chain: All-trans-retinol dehydrogenase [NAD(+)] ADH7 (374 aa).

Residues Cys-47, His-68, Cys-98, Cys-101, Cys-104, Cys-112, and Cys-174 each contribute to the Zn(2+) site. Residues 199–204 (GLGGVG), Asp-223, Lys-228, 292–294 (VGA), and Arg-369 contribute to the NAD(+) site.

It belongs to the zinc-containing alcohol dehydrogenase family. Class-IV subfamily. In terms of assembly, homodimer. Requires Zn(2+) as cofactor. In terms of tissue distribution, high expression in the stomach mucosa. Lower expression in eye, thymus, skin and ovary. Very low expression in small intestine, liver and uterus.

Its subcellular location is the cytoplasm. It carries out the reaction a primary alcohol + NAD(+) = an aldehyde + NADH + H(+). The catalysed reaction is 10-hydroxydecanoate + NAD(+) = 10-oxodecanoate + NADH + H(+). The enzyme catalyses all-trans-retinol + NAD(+) = all-trans-retinal + NADH + H(+). It catalyses the reaction 9-cis-retinol + NAD(+) = 9-cis-retinal + NADH + H(+). It carries out the reaction all-trans-3,4-didehydroretinol + NAD(+) = all-trans-3,4-didehydroretinal + NADH + H(+). The catalysed reaction is all-trans-4-hydroxyretinol + NAD(+) = all-trans-4-hydroxyretinal + NADH + H(+). The enzyme catalyses all-trans-4-oxoretinol + NAD(+) = all-trans-4-oxoretinal + NADH + H(+). It catalyses the reaction 12-hydroxydodecanoate + NAD(+) = 12-oxododecanoate + NADH + H(+). It carries out the reaction 16-hydroxyhexadecanoate + NAD(+) = 16-oxohexadecanoate + NADH + H(+). The catalysed reaction is hexan-1-ol + NAD(+) = hexanal + NADH + H(+). The enzyme catalyses (E)-hex-2-en-1-ol + NAD(+) = (E)-hex-2-enal + NADH + H(+). It catalyses the reaction (E)-4-hydroxynon-2-en-1-ol + NAD(+) = (E)-4-hydroxynon-2-enal + NADH + H(+). Its activity is regulated as follows. Retinol oxidation is inhibited by the detergent Tween 80. Ethanol inhibits both all-trans-retinol and 9-cis-retinol oxidation. 13-cis-retinol is an effective competitive inhibitor of the 9-cis-retinol oxidation. All-trans-retinoic acid is a powerful inhibitor of all-trans-retinol oxidation. 13-cis-retinoic acid is a powerful inhibitor of all-trans-retinol oxidation. Cimetidine competitively inhibited ethanol oxidation. Its function is as follows. Catalyzes the NAD-dependent oxidation of all-trans-retinol, alcohol, aldehyde and omega-hydroxy fatty acids and their derivatives. Oxidizes preferentially all trans-retinol, all-trans-4-hydroxyretinol, 9-cis-retinol, 2-hexenol, and long chain omega-hydroxy fatty acids such as juniperic acid. In vitro can also catalyze the NADH-dependent reduction of all-trans-retinal and aldehydes and their derivatives. Reduces preferentially all trans-retinal, all-trans-4-oxoretinal and hexanal. Catalyzes in the oxidative direction with higher efficiency. Therefore may participate in retinoid metabolism, fatty acid omega-oxidation, and elimination of cytotoxic aldehydes produced by lipid peroxidation. In Mus musculus (Mouse), this protein is All-trans-retinol dehydrogenase [NAD(+)] ADH7 (Adh7).